A 142-amino-acid polypeptide reads, in one-letter code: Acidic phospholipase A2 PA4 (142 aa).

Ca(2+)-binding residues include Trp-10, Gly-12, and Gly-14. Cystine bridges form between Cys-11–Cys-33, Cys-32–Cys-72, and Cys-39–Cys-65. His-36 is a catalytic residue. Residue Asp-37 participates in Ca(2+) binding.

Belongs to the phospholipase A2 family. Group III subfamily. Ca(2+) is required as a cofactor. Expressed by the venom gland.

Its subcellular location is the secreted. The enzyme catalyses a 1,2-diacyl-sn-glycero-3-phosphocholine + H2O = a 1-acyl-sn-glycero-3-phosphocholine + a fatty acid + H(+). PLA2 catalyzes the calcium-dependent hydrolysis of the 2-acyl groups in 3-sn-phosphoglycerides. This Heloderma suspectum (Gila monster) protein is Acidic phospholipase A2 PA4.